A 199-amino-acid chain; its full sequence is Probable GTP-binding protein EngB (199 aa).

The region spanning 25-199 (IGMEVAFVGY…LKRVLNNWLR (175 aa)) is the EngB-type G domain. The Mg(2+) site is built by Ser40 and Thr62.

This sequence belongs to the TRAFAC class TrmE-Era-EngA-EngB-Septin-like GTPase superfamily. EngB GTPase family. Requires Mg(2+) as cofactor.

Functionally, necessary for normal cell division and for the maintenance of normal septation. This is Probable GTP-binding protein EngB from Blochmanniella pennsylvanica (strain BPEN).